A 197-amino-acid chain; its full sequence is Elongation factor Ts (197 aa).

An involved in Mg(2+) ion dislocation from EF-Tu region spans residues 81–84 (TDFV).

Belongs to the EF-Ts family.

It localises to the cytoplasm. Functionally, associates with the EF-Tu.GDP complex and induces the exchange of GDP to GTP. It remains bound to the aminoacyl-tRNA.EF-Tu.GTP complex up to the GTP hydrolysis stage on the ribosome. The chain is Elongation factor Ts from Sulfurihydrogenibium sp. (strain YO3AOP1).